The chain runs to 455 residues: Kynurenine 3-monooxygenase (455 aa).

Belongs to the aromatic-ring hydroxylase family. KMO subfamily. FAD serves as cofactor.

The enzyme catalyses L-kynurenine + NADPH + O2 + H(+) = 3-hydroxy-L-kynurenine + NADP(+) + H2O. It participates in cofactor biosynthesis; NAD(+) biosynthesis; quinolinate from L-kynurenine: step 1/3. Functionally, catalyzes the hydroxylation of L-kynurenine (L-Kyn) to form 3-hydroxy-L-kynurenine (L-3OHKyn). Required for synthesis of quinolinic acid. In Xanthomonas oryzae pv. oryzae (strain MAFF 311018), this protein is Kynurenine 3-monooxygenase.